The sequence spans 112 residues: Putative regulatory protein DP2861 (112 aa).

This sequence belongs to the RemA family.

The chain is Putative regulatory protein DP2861 from Desulfotalea psychrophila (strain LSv54 / DSM 12343).